Consider the following 501-residue polypeptide: Cytochrome P450 monooxygenase notH (501 aa).

The chain crosses the membrane as a helical span at residues 11–31 (LGLESVGWVLGLLTTSILYLF). Asn298 carries an N-linked (GlcNAc...) asparagine glycan. Residue Cys442 coordinates heme.

It belongs to the cytochrome P450 family. It depends on heme as a cofactor.

The protein resides in the membrane. Its pathway is alkaloid biosynthesis. Cytochrome P450 monooxygenase; part of the gene cluster that mediates the biosynthesis of notoamide, a fungal indole alkaloid that belongs to a family of natural products containing a characteristic bicyclo[2.2.2]diazaoctane core. The first step of notoamide biosynthesis involves coupling of L-proline and L-tryptophan by the bimodular NRPS notE, to produce cyclo-L-tryptophan-L-proline called brevianamide F. The reverse prenyltransferase notF then acts as a deoxybrevianamide E synthase and converts brevianamide F to deoxybrevianamide E via reverse prenylation at C-2 of the indole ring leading to the bicyclo[2.2.2]diazaoctane core. Deoxybrevianamide E is further hydroxylated at C-6 of the indole ring, likely catalyzed by the cytochrome P450 monooxygenase notG, to yield 6-hydroxy-deoxybrevianamide E. 6-hydroxy-deoxybrevianamide E is a specific substrate of the prenyltransferase notC for normal prenylation at C-7 to produce 6-hydroxy-7-prenyl-deoxybrevianamide, also called notoamide S. As the proposed pivotal branching point in notoamide biosynthesis, notoamide S can be diverted to notoamide E through an oxidative pyran ring closure putatively catalyzed by either notH cytochrome P450 monooxygenase or the notD FAD-linked oxidoreductase. This step would be followed by an indole 2,3-epoxidation-initiated pinacol-like rearrangement catalyzed by the notB FAD-dependent monooxygenase leading to the formation of notoamide C and notoamide D. On the other hand notoamide S is converted to notoamide T by notH (or notD), a bifunctional oxidase that also functions as the intramolecular Diels-Alderase responsible for generation of (+)-notoamide T. To generate antipodal (-)-notoaminide T, notH' (or notD') in Aspergillus versicolor is expected to catalyze a Diels-Alder reaction leading to the opposite stereochemistry. The remaining oxidoreductase notD (or notH) likely catalyzes the oxidative pyran ring formation to yield (+)-stephacidin A. The FAD-dependent monooxygenase notI is highly similar to notB and is predicted to catalyze a similar conversion from (+)-stephacidin A to (-)-notoamide B via the 2,3-epoxidation of (+)-stephacidin A followed by a pinacol-type rearrangement. Finally, it remains unclear which enzyme could be responsible for the final hydroxylation steps leading to notoamide A and sclerotiamide. The protein is Cytochrome P450 monooxygenase notH of Aspergillus sp. (strain MF297-2).